The chain runs to 671 residues: DNA ligase (671 aa).

Residues 31-35, 80-81, and glutamate 110 contribute to the NAD(+) site; these read DAEYD and SL. Lysine 112 acts as the N6-AMP-lysine intermediate in catalysis. Positions 133, 167, 283, and 307 each coordinate NAD(+). 4 residues coordinate Zn(2+): cysteine 401, cysteine 404, cysteine 419, and cysteine 424. In terms of domain architecture, BRCT spans 587–671; that stretch reads EEELVFTGKT…YLPDEGGLNE (85 aa).

This sequence belongs to the NAD-dependent DNA ligase family. LigA subfamily. Mg(2+) is required as a cofactor. Requires Mn(2+) as cofactor.

It carries out the reaction NAD(+) + (deoxyribonucleotide)n-3'-hydroxyl + 5'-phospho-(deoxyribonucleotide)m = (deoxyribonucleotide)n+m + AMP + beta-nicotinamide D-nucleotide.. In terms of biological role, DNA ligase that catalyzes the formation of phosphodiester linkages between 5'-phosphoryl and 3'-hydroxyl groups in double-stranded DNA using NAD as a coenzyme and as the energy source for the reaction. It is essential for DNA replication and repair of damaged DNA. This Listeria monocytogenes serotype 4b (strain F2365) protein is DNA ligase.